The chain runs to 385 residues: Chaperone protein DnaJ (385 aa).

The 66-residue stretch at 5 to 70 (DFYDVLGVSR…QSRAAYDQFG (66 aa)) folds into the J domain. A CR-type zinc finger spans residues 143-221 (GKKAQVRVPG…CHGAGRVEKE (79 aa)). The Zn(2+) site is built by Cys156, Cys159, Cys173, Cys176, Cys195, Cys198, Cys209, and Cys212. CXXCXGXG motif repeat units follow at residues 156–163 (CEVCTGTG), 173–180 (CPTCQGHG), 195–202 (CPTCHGRG), and 209–216 (CTNCHGAG).

It belongs to the DnaJ family. As to quaternary structure, homodimer. Zn(2+) is required as a cofactor.

The protein localises to the cytoplasm. Participates actively in the response to hyperosmotic and heat shock by preventing the aggregation of stress-denatured proteins and by disaggregating proteins, also in an autonomous, DnaK-independent fashion. Unfolded proteins bind initially to DnaJ; upon interaction with the DnaJ-bound protein, DnaK hydrolyzes its bound ATP, resulting in the formation of a stable complex. GrpE releases ADP from DnaK; ATP binding to DnaK triggers the release of the substrate protein, thus completing the reaction cycle. Several rounds of ATP-dependent interactions between DnaJ, DnaK and GrpE are required for fully efficient folding. Also involved, together with DnaK and GrpE, in the DNA replication of plasmids through activation of initiation proteins. The protein is Chaperone protein DnaJ of Parvibaculum lavamentivorans (strain DS-1 / DSM 13023 / NCIMB 13966).